The sequence spans 834 residues: Protein translocase subunit SecA (834 aa).

ATP contacts are provided by residues Gln85, Gly103–Thr107, and Asp491. Residues Cys818, Cys820, Cys829, and Cys830 each contribute to the Zn(2+) site.

This sequence belongs to the SecA family. In terms of assembly, monomer and homodimer. Part of the essential Sec protein translocation apparatus which comprises SecA, SecYEG and auxiliary proteins SecDF. Other proteins may also be involved. Requires Zn(2+) as cofactor.

Its subcellular location is the cell membrane. The protein localises to the cytoplasm. It catalyses the reaction ATP + H2O + cellular proteinSide 1 = ADP + phosphate + cellular proteinSide 2.. Functionally, part of the Sec protein translocase complex. Interacts with the SecYEG preprotein conducting channel. Has a central role in coupling the hydrolysis of ATP to the transfer of proteins into and across the cell membrane, serving as an ATP-driven molecular motor driving the stepwise translocation of polypeptide chains across the membrane. The sequence is that of Protein translocase subunit SecA from Clostridium kluyveri (strain ATCC 8527 / DSM 555 / NBRC 12016 / NCIMB 10680 / K1).